The primary structure comprises 555 residues: CTL-like protein DDB_G0274487 (555 aa).

The segment covering 1 to 17 has biased composition (polar residues); it reads MGIEDNSQQPNTGSPYG. The disordered stretch occupies residues 1–101; the sequence is MGIEDNSQQP…NLNKANDRES (101 aa). A compositionally biased stretch (low complexity) spans 19 to 63; that stretch reads SPPSQYNPYGQQPPQQQQYNPYGEQQQQPQQQQQYGYQPQFQPTY. The segment covering 79–90 has biased composition (pro residues); it reads PFPPQQQQPPPI. Asparagine 116 carries N-linked (GlcNAc...) asparagine glycosylation. Residues 138–158 traverse the membrane as a helical segment; it reads IWFSILFGLNFGLLIVVSASA. A glycan (N-linked (GlcNAc...) asparagine) is linked at asparagine 174. Helical transmembrane passes span 182–202, 210–230, 231–251, 284–304, 313–333, 340–360, 372–392, 405–425, 472–492, and 493–513; these read FLFAILPFTIVFSLLYIWAWL, ESLIKYSFFGAMGLMIGYCVF, FFVWGAIYLGIIFAIMAFFII, AGYVSIFINFVWFIVWGSAFA, AIQTCINIYLVFTLYWVFHVI, TVSGLLATWYFCSGPNGVGMP, LTTSFGSICFGSLIISLIETL, VVVKIIGYIFNCILSMLSSIV, IAIGGLVASLLLSILGALISI, and PFDMSVYGGALALFIGYLVII.

Belongs to the CTL (choline transporter-like) family.

It localises to the membrane. In Dictyostelium discoideum (Social amoeba), this protein is CTL-like protein DDB_G0274487.